Consider the following 205-residue polypeptide: Small ribosomal subunit protein uS4 (205 aa).

The segment covering 1-16 has biased composition (basic and acidic residues); that stretch reads MSKRESSKYKIDRRMG. Residues 1 to 46 are disordered; the sequence is MSKRESSKYKIDRRMGENIWGRPKSPVNRREYGPGQHGQRRKSKLS. The 64-residue stretch at 94 to 157 folds into the S4 RNA-binding domain; that stretch reads SRLDAIVYRA…KQLVTVLEAV (64 aa).

The protein belongs to the universal ribosomal protein uS4 family. In terms of assembly, part of the 30S ribosomal subunit. Contacts protein S5. The interaction surface between S4 and S5 is involved in control of translational fidelity.

Its function is as follows. One of the primary rRNA binding proteins, it binds directly to 16S rRNA where it nucleates assembly of the body of the 30S subunit. Functionally, with S5 and S12 plays an important role in translational accuracy. This is Small ribosomal subunit protein uS4 from Sinorhizobium medicae (strain WSM419) (Ensifer medicae).